A 209-amino-acid chain; its full sequence is LexA repressor (209 aa).

The H-T-H motif DNA-binding region spans 32–52 (VREIGKAVDLSSTSTVHGHLA). Residues serine 131 and lysine 169 each act as for autocatalytic cleavage activity in the active site.

It belongs to the peptidase S24 family. In terms of assembly, homodimer.

The catalysed reaction is Hydrolysis of Ala-|-Gly bond in repressor LexA.. Represses a number of genes involved in the response to DNA damage (SOS response), including recA and lexA. In the presence of single-stranded DNA, RecA interacts with LexA causing an autocatalytic cleavage which disrupts the DNA-binding part of LexA, leading to derepression of the SOS regulon and eventually DNA repair. The polypeptide is LexA repressor (Enterococcus faecalis (strain ATCC 700802 / V583)).